The sequence spans 152 residues: Large-conductance mechanosensitive channel (152 aa).

Transmembrane regions (helical) follow at residues 14 to 34 (VIDL…VTSL) and 81 to 101 (GLFL…FIAI).

It belongs to the MscL family. Homopentamer.

The protein resides in the cell membrane. Channel that opens in response to stretch forces in the membrane lipid bilayer. May participate in the regulation of osmotic pressure changes within the cell. This Clostridium perfringens (strain 13 / Type A) protein is Large-conductance mechanosensitive channel.